Reading from the N-terminus, the 435-residue chain is Methylenetetrahydrofolate--tRNA-(uracil-5-)-methyltransferase TrmFO (435 aa).

9–14 (GGGLAG) is an FAD binding site.

The protein belongs to the MnmG family. TrmFO subfamily. The cofactor is FAD.

Its subcellular location is the cytoplasm. The catalysed reaction is uridine(54) in tRNA + (6R)-5,10-methylene-5,6,7,8-tetrahydrofolate + NADH + H(+) = 5-methyluridine(54) in tRNA + (6S)-5,6,7,8-tetrahydrofolate + NAD(+). It carries out the reaction uridine(54) in tRNA + (6R)-5,10-methylene-5,6,7,8-tetrahydrofolate + NADPH + H(+) = 5-methyluridine(54) in tRNA + (6S)-5,6,7,8-tetrahydrofolate + NADP(+). Its function is as follows. Catalyzes the folate-dependent formation of 5-methyl-uridine at position 54 (M-5-U54) in all tRNAs. In Citrifermentans bemidjiense (strain ATCC BAA-1014 / DSM 16622 / JCM 12645 / Bem) (Geobacter bemidjiensis), this protein is Methylenetetrahydrofolate--tRNA-(uracil-5-)-methyltransferase TrmFO.